The following is a 253-amino-acid chain: Ethylene-responsive transcription factor RAP2-11 (253 aa).

A DNA-binding region (AP2/ERF) is located at residues lysine 21–alanine 78.

The protein belongs to the AP2/ERF transcription factor family. ERF subfamily.

Its subcellular location is the nucleus. In terms of biological role, probably acts as a transcriptional activator. Binds to the GCC-box pathogenesis-related promoter element. May be involved in the regulation of gene expression by stress factors and by components of stress signal transduction pathways. The protein is Ethylene-responsive transcription factor RAP2-11 (RAP2-11) of Arabidopsis thaliana (Mouse-ear cress).